The following is a 170-amino-acid chain: Cyclic pyranopterin monophosphate synthase 1 (170 aa).

Substrate-binding positions include 79–81 (LCH) and 116–117 (ME). The active site involves Asp-131.

It belongs to the MoaC family. In terms of assembly, homohexamer; trimer of dimers.

The catalysed reaction is (8S)-3',8-cyclo-7,8-dihydroguanosine 5'-triphosphate = cyclic pyranopterin phosphate + diphosphate. It functions in the pathway cofactor biosynthesis; molybdopterin biosynthesis. Its function is as follows. Catalyzes the conversion of (8S)-3',8-cyclo-7,8-dihydroguanosine 5'-triphosphate to cyclic pyranopterin monophosphate (cPMP). The protein is Cyclic pyranopterin monophosphate synthase 1 (moaC1) of Mycobacterium bovis (strain ATCC BAA-935 / AF2122/97).